The chain runs to 514 residues: Major facilitator superfamily domain-containing protein 4A (514 aa).

Transmembrane regions (helical) follow at residues 19-39 (LTYW…GPTL), 53-73 (ISWV…LGGV), 82-102 (LWAL…IPFC), 107-127 (VLAS…TVAN), and 139-159 (AVFL…SPLI). A glycan (N-linked (GlcNAc...) asparagine) is linked at Asn-177. Helical transmembrane passes span 221–241 (YAFW…LMLL), 307–327 (FFAI…LTGA), 347–367 (VAGY…LLSI), 376–396 (ATMV…LLIF), 400–420 (VVFL…TFPS), 438–458 (VLVT…GSIF), and 466–486 (FLVC…LLLF).

This sequence belongs to the major facilitator superfamily.

The protein resides in the membrane. This is Major facilitator superfamily domain-containing protein 4A from Homo sapiens (Human).